Consider the following 153-residue polypeptide: UPF0756 membrane protein NT01CX_1209 (153 aa).

The next 4 membrane-spanning stretches (helical) occupy residues 5-25 (IILL…LGIA), 45-65 (ENHF…IPII), 83-103 (IVCF…VGFL), and 113-133 (IILG…GPLI).

The protein belongs to the UPF0756 family.

It localises to the cell membrane. This is UPF0756 membrane protein NT01CX_1209 from Clostridium novyi (strain NT).